Reading from the N-terminus, the 2345-residue chain is Acetyl-CoA carboxylase 1 (2345 aa).

Met-1 carries the post-translational modification N-acetylmethionine. Phosphoserine is present on residues Ser-5, Ser-23, Ser-25, Ser-29, Ser-34, Ser-47, Ser-49, and Ser-52. At Thr-57 the chain carries Phosphothreonine. The residue at position 77 (Ser-77) is a Phosphoserine. Ser-79 carries the phosphoserine; by AMPK modification. The Biotin carboxylation domain occupies 116 to 617; the sequence is VIEKVLIANN…DTGWLDRLIA (502 aa). In terms of domain architecture, ATP-grasp spans 274-465; the sequence is SKRILNVPQD…LPAAQLQIAM (192 aa). ATP is bound at residue 314-319; the sequence is GGGGKG. Mg(2+)-binding residues include Glu-423, Glu-436, and Asn-438. Mn(2+) is bound by residues Glu-423, Glu-436, and Asn-438. The active site involves Arg-440. Thr-609 is subject to Phosphothreonine. One can recognise a Biotinyl-binding domain in the interval 744–818; the sequence is FEKENDPSVM…DPGCVIAKMQ (75 aa). At Lys-785 the chain carries N6-biotinyllysine. Position 834 is a phosphoserine (Ser-834). Residues Ser-1200 and Ser-1215 each carry the phosphoserine; by AMPK; in vitro modification. A Phosphoserine modification is found at Ser-1217. The residue at position 1226 (Thr-1226) is a Phosphothreonine. 3 positions are modified to phosphoserine: Ser-1258, Ser-1262, and Ser-1272. N6-acetyllysine is present on Lys-1333. In terms of domain architecture, CoA carboxyltransferase N-terminal spans 1575-1913; the sequence is PYVTKDLLQS…NVHSSVPLLN (339 aa). The interval 1575–2233 is carboxyltransferase; that stretch reads PYVTKDLLQS…EDLVKKKIHS (659 aa). Arg-1822, Lys-2126, and Arg-2128 together coordinate CoA. The 317-residue stretch at 1917-2233 folds into the CoA carboxyltransferase C-terminal domain; it reads PIDRIIEFVP…EDLVKKKIHS (317 aa). Thr-2152 carries the post-translational modification Phosphothreonine.

Monomer, homodimer, and homotetramer. Can form filamentous polymers. Interacts in its inactive phosphorylated form with the BRCT domains of BRCA1 which prevents ACACA dephosphorylation and inhibits lipid synthesis. Interacts with MID1IP1; interaction with MID1IP1 promotes oligomerization and increases its activity. It depends on Mg(2+) as a cofactor. The cofactor is Mn(2+). Biotin serves as cofactor. The N-terminus is blocked. Post-translationally, phosphorylation on Ser-1262 is required for interaction with BRCA1. In terms of processing, phosphorylation at Ser-79 by AMPK inactivates enzyme activity. Phosphorylated in vitro at Ser-1200 and Ser-1215 by AMPK; the relevance of phosphorylation of these sites in vivo is however unclear. The biotin cofactor is covalently attached to the central biotinyl-binding domain and is required for the catalytic activity.

It localises to the cytoplasm. The protein resides in the cytosol. The enzyme catalyses hydrogencarbonate + acetyl-CoA + ATP = malonyl-CoA + ADP + phosphate + H(+). The protein operates within lipid metabolism; malonyl-CoA biosynthesis; malonyl-CoA from acetyl-CoA: step 1/1. Its activity is regulated as follows. Inhibited by phosphorylation. Citrate promotes oligomerization of the protein into filaments that correspond to the most active form of the carboxylase. Cytosolic enzyme that catalyzes the carboxylation of acetyl-CoA to malonyl-CoA, the first and rate-limiting step of de novo fatty acid biosynthesis. This is a 2 steps reaction starting with the ATP-dependent carboxylation of the biotin carried by the biotin carboxyl carrier (BCC) domain followed by the transfer of the carboxyl group from carboxylated biotin to acetyl-CoA. The protein is Acetyl-CoA carboxylase 1 of Rattus norvegicus (Rat).